An 80-amino-acid chain; its full sequence is Protein CEBPZOS (80 aa).

The helical transmembrane segment at 15–31 (GVLAAELVGVAGAYCLF) threads the bilayer.

Its subcellular location is the mitochondrion membrane. The protein is Protein CEBPZOS of Mus musculus (Mouse).